A 242-amino-acid polypeptide reads, in one-letter code: Probable proteasome subunit alpha type-7 (242 aa).

Belongs to the peptidase T1A family. As to quaternary structure, the 26S proteasome consists of a 20S proteasome core and two 19S regulatory subunits. The 20S proteasome core is composed of 28 subunits that are arranged in four stacked rings, resulting in a barrel-shaped structure. The two end rings are each formed by seven alpha subunits, and the two central rings are each formed by seven beta subunits. The catalytic chamber with the active sites is on the inside of the barrel.

The protein localises to the cytoplasm. The protein resides in the nucleus. In terms of biological role, the proteasome degrades poly-ubiquitinated proteins in the cytoplasm and in the nucleus. It is essential for the regulated turnover of proteins and for the removal of misfolded proteins. The proteasome is a multicatalytic proteinase complex that is characterized by its ability to cleave peptides with Arg, Phe, Tyr, Leu, and Glu adjacent to the leaving group at neutral or slightly basic pH. It has an ATP-dependent proteolytic activity. This is Probable proteasome subunit alpha type-7 (PRE10) from Encephalitozoon cuniculi (strain GB-M1) (Microsporidian parasite).